The chain runs to 201 residues: Small ribosomal subunit protein uS4 (201 aa).

The 61-residue stretch at 91-151 folds into the S4 RNA-binding domain; the sequence is SRLDNVVYRA…EKSRKMVWFD (61 aa).

The protein belongs to the universal ribosomal protein uS4 family. Part of the 30S ribosomal subunit. Contacts protein S5. The interaction surface between S4 and S5 is involved in control of translational fidelity.

Functionally, one of the primary rRNA binding proteins, it binds directly to 16S rRNA where it nucleates assembly of the body of the 30S subunit. Its function is as follows. With S5 and S12 plays an important role in translational accuracy. This is Small ribosomal subunit protein uS4 from Corynebacterium kroppenstedtii (strain DSM 44385 / JCM 11950 / CIP 105744 / CCUG 35717).